Here is a 339-residue protein sequence, read N- to C-terminus: UDP-N-acetylglucosamine--N-acetylmuramyl-(pentapeptide) pyrophosphoryl-undecaprenol N-acetylglucosamine transferase (339 aa).

UDP-N-acetyl-alpha-D-glucosamine-binding positions include 9 to 11 (TGG), Asn119, Arg160, Ser188, and Gln280.

This sequence belongs to the glycosyltransferase 28 family. MurG subfamily.

The protein resides in the cell inner membrane. The catalysed reaction is di-trans,octa-cis-undecaprenyl diphospho-N-acetyl-alpha-D-muramoyl-L-alanyl-D-glutamyl-meso-2,6-diaminopimeloyl-D-alanyl-D-alanine + UDP-N-acetyl-alpha-D-glucosamine = di-trans,octa-cis-undecaprenyl diphospho-[N-acetyl-alpha-D-glucosaminyl-(1-&gt;4)]-N-acetyl-alpha-D-muramoyl-L-alanyl-D-glutamyl-meso-2,6-diaminopimeloyl-D-alanyl-D-alanine + UDP + H(+). The protein operates within cell wall biogenesis; peptidoglycan biosynthesis. Its function is as follows. Cell wall formation. Catalyzes the transfer of a GlcNAc subunit on undecaprenyl-pyrophosphoryl-MurNAc-pentapeptide (lipid intermediate I) to form undecaprenyl-pyrophosphoryl-MurNAc-(pentapeptide)GlcNAc (lipid intermediate II). The sequence is that of UDP-N-acetylglucosamine--N-acetylmuramyl-(pentapeptide) pyrophosphoryl-undecaprenol N-acetylglucosamine transferase from Thermus thermophilus (strain ATCC BAA-163 / DSM 7039 / HB27).